Consider the following 86-residue polypeptide: Small ribosomal subunit protein bS20 (86 aa).

The tract at residues 1–25 is disordered; it reads MANSASSRKRARQAVKRNKHNSQIR. A compositionally biased stretch (basic residues) spans 7–25; the sequence is SRKRARQAVKRNKHNSQIR.

Belongs to the bacterial ribosomal protein bS20 family.

Functionally, binds directly to 16S ribosomal RNA. This is Small ribosomal subunit protein bS20 from Vesicomyosocius okutanii subsp. Calyptogena okutanii (strain HA).